A 492-amino-acid polypeptide reads, in one-letter code: NADH-quinone oxidoreductase subunit N (492 aa).

Helical transmembrane passes span 5 to 25 (PMTA…AWLI), 37 to 57 (TYFI…IDAL), 72 to 92 (VVDP…AVSI), 104 to 124 (LYEG…LVMI), 129 to 149 (FLTL…AIAL), 164 to 184 (YVLG…LYGA), 205 to 225 (VVLL…MGAV), 239 to 259 (PTAM…AWGL), 276 to 295 (MLVI…GIVQ), 302 to 322 (LAYS…AGVV), 337 to 357 (MFYS…VMLL), 380 to 400 (FAFV…AVGF), 414 to 434 (GLTW…FYYL), and 466 to 486 (VAVL…LNAI).

It belongs to the complex I subunit 2 family. NDH-1 is composed of 14 different subunits. Subunits NuoA, H, J, K, L, M, N constitute the membrane sector of the complex.

It localises to the cell inner membrane. The enzyme catalyses a quinone + NADH + 5 H(+)(in) = a quinol + NAD(+) + 4 H(+)(out). Functionally, NDH-1 shuttles electrons from NADH, via FMN and iron-sulfur (Fe-S) centers, to quinones in the respiratory chain. The immediate electron acceptor for the enzyme in this species is believed to be ubiquinone. Couples the redox reaction to proton translocation (for every two electrons transferred, four hydrogen ions are translocated across the cytoplasmic membrane), and thus conserves the redox energy in a proton gradient. This chain is NADH-quinone oxidoreductase subunit N, found in Paraburkholderia phymatum (strain DSM 17167 / CIP 108236 / LMG 21445 / STM815) (Burkholderia phymatum).